A 515-amino-acid chain; its full sequence is Maturase K (515 aa).

The protein belongs to the intron maturase 2 family. MatK subfamily.

The protein resides in the plastid. It localises to the chloroplast. Functionally, usually encoded in the trnK tRNA gene intron. Probably assists in splicing its own and other chloroplast group II introns. This Zingiber mioga (Myoga ginger) protein is Maturase K.